The sequence spans 375 residues: Phosphoribulokinase, chloroplastic (375 aa).

The transit peptide at 1–31 (MAFTMRAPAPRATAQSRVTANRARRSLVVRA) directs the protein to the chloroplast. Cys-47 and Cys-86 are oxidised to a cystine.

The protein belongs to the phosphoribulokinase family. Component of a complex that contains two dimers of PRK, two tetramers of GAPDH and CP12.

It localises to the plastid. The protein localises to the chloroplast. The enzyme catalyses D-ribulose 5-phosphate + ATP = D-ribulose 1,5-bisphosphate + ADP + H(+). It functions in the pathway carbohydrate biosynthesis; Calvin cycle. Its activity is regulated as follows. Light regulated via thioredoxin by reversible oxidation/reduction of sulfhydryl/disulfide groups. This chain is Phosphoribulokinase, chloroplastic (PRKA), found in Chlamydomonas reinhardtii (Chlamydomonas smithii).